A 509-amino-acid chain; its full sequence is MASHSLNTLHTVFEYIWDRELPNDDFTNTLTVLGRTYAPGPPPHQEKAPDLRTLFHKFKPDQAADTEASWPREFLRDVHSRIWLTYRSGFPLIKRAEDGPSPLSFGSLIRGTVDLATVTKGFTTDAGWGCMIRTSQSLLANSLLQLRLGRGWRYDQTRECAKHAEIVSWFVDIPTAPFSIHNFVEQGANCAGKKPGEWFGPSAAARSIQVLCEANYDKTGLKVYFTASGDIYEDELFELAQQGAELRPVLILAGIRLGVKNVNPLYWDFLKKTLGWPQSVGIAGGRPSSSHYFFGFQGDYLFYLDPHVPQKALLIASEAPHESPDPNHYVEVESGLDLDSVHTNKIRKLHLDQMDPSMLVGLLVENRASYDALKHSINSHDQGSRFLNVYDSRPVLAAKSSGGLEESEFVDLGVLSMNEYDAIDDCDVGTCSALLRKERAFSHPVLVAMDPEEPEEIDASIHFDKDASILEKDPDRANETFEEIHVSETESRFEPDEPVVVSHDSAAVM.

Cys-130 (nucleophile) is an active-site residue. Active-site residues include Asp-305 and His-307.

It belongs to the peptidase C54 family.

The protein localises to the cytoplasm. Its subcellular location is the nucleus. It is found in the preautophagosomal structure. The catalysed reaction is [protein]-C-terminal L-amino acid-glycyl-phosphatidylethanolamide + H2O = [protein]-C-terminal L-amino acid-glycine + a 1,2-diacyl-sn-glycero-3-phosphoethanolamine. Its function is as follows. Cysteine protease that plays a key role in cytoplasm to vacuole transport (Cvt) and autophagy by mediating both proteolytic activation and delipidation of ATG8. Required for selective autophagic degradation of the nucleus (nucleophagy) as well as for mitophagy which contributes to regulate mitochondrial quantity and quality by eliminating the mitochondria to a basal level to fulfill cellular energy requirements and preventing excess ROS production. The protease activity is required for proteolytic activation of ATG8: cleaves the C-terminal amino acid of ATG8 to reveal a C-terminal glycine. ATG8 ubiquitin-like activity requires the exposure of the glycine at the C-terminus for its conjugation to phosphatidylethanolamine (PE) and its insertion to membranes, which is necessary for autophagy. The ATG8-PE conjugate mediates tethering between adjacent membranes and stimulates membrane hemifusion, leading to expansion of the autophagosomal membrane during autophagy. In addition to the protease activity, also catalyzes deconjugation of PE-conjugated forms of ATG8 during macroautophagy: ATG8 delipidation is required to release the protein from membranes, which facilitates multiple events during macroautophagy, and especially for efficient autophagosome biogenesis, the assembly of ATG9-containing tubulovesicular clusters into phagophores/autophagosomes, and for the disassembly of PAS-associated ATG components. ATG8 delipidation by ATG4 also recycles ATG8-PE generated on inappropriate membranes to maintain a reservoir of unlipidated ATG8 that is required for autophagosome formation at the PAS. This Pichia angusta (Yeast) protein is Probable cysteine protease ATG4 (ATG4).